Consider the following 216-residue polypeptide: Probable nicotinate-nucleotide adenylyltransferase (216 aa).

It belongs to the NadD family.

It carries out the reaction nicotinate beta-D-ribonucleotide + ATP + H(+) = deamido-NAD(+) + diphosphate. The protein operates within cofactor biosynthesis; NAD(+) biosynthesis; deamido-NAD(+) from nicotinate D-ribonucleotide: step 1/1. Catalyzes the reversible adenylation of nicotinate mononucleotide (NaMN) to nicotinic acid adenine dinucleotide (NaAD). The chain is Probable nicotinate-nucleotide adenylyltransferase from Shewanella baltica (strain OS223).